Reading from the N-terminus, the 346-residue chain is Dihydroorotase (346 aa).

The Zn(2+) site is built by His17 and His19. Residues 19-21 (HLR) and Asn45 each bind substrate. Lys103, His140, and His178 together coordinate Zn(2+). Position 103 is an N6-carboxylysine (Lys103). Substrate is bound at residue His140. Residue Leu223 participates in substrate binding. Asp251 contacts Zn(2+). The active site involves Asp251. The substrate site is built by His255 and Ala267.

Belongs to the metallo-dependent hydrolases superfamily. DHOase family. Class II DHOase subfamily. As to quaternary structure, homodimer. Requires Zn(2+) as cofactor.

The catalysed reaction is (S)-dihydroorotate + H2O = N-carbamoyl-L-aspartate + H(+). Its pathway is pyrimidine metabolism; UMP biosynthesis via de novo pathway; (S)-dihydroorotate from bicarbonate: step 3/3. In terms of biological role, catalyzes the reversible cyclization of carbamoyl aspartate to dihydroorotate. The chain is Dihydroorotase from Synechococcus sp. (strain RCC307).